The following is a 260-amino-acid chain: MLTNYLLIIFCFLALFCSFMIIASKNPIHSILYLILVFCNVTFVLIILGVEFIAIIFLIVYVGAIAVLFLFVVMMLNIKILELDEVFWRYIPAGLLISSCFLFQLFTFVFNFSVVEVFGLFFYNGFYSINKLALNFSEIHTVPSGLLINGIYIFPNLSNLGIDQVFINSIYKEESFFCFVKLNEASTNLLGLSFELTNTEILGWLVYTYTFFIFLVVSLILLISMIGSIILVLNQNINIKRQVIFRQSLRDLKSSVSLKN.

The next 6 membrane-spanning stretches (helical) occupy residues 2–22 (LTNYLLIIFCFLALFCSFMII), 30–50 (SILYLILVFCNVTFVLIILGV), 52–72 (FIAIIFLIVYVGAIAVLFLFV), 101–121 (FLFQLFTFVFNFSVVEVFGLF), 142–162 (VPSGLLINGIYIFPNLSNLGI), and 211–231 (FFIFLVVSLILLISMIGSIIL).

The protein belongs to the complex I subunit 6 family.

Its subcellular location is the mitochondrion membrane. The enzyme catalyses a ubiquinone + NADH + 5 H(+)(in) = a ubiquinol + NAD(+) + 4 H(+)(out). Its function is as follows. Core subunit of the mitochondrial membrane respiratory chain NADH dehydrogenase (Complex I) that is believed to belong to the minimal assembly required for catalysis. Complex I functions in the transfer of electrons from NADH to the respiratory chain. The immediate electron acceptor for the enzyme is believed to be ubiquinone. In Acanthamoeba castellanii (Amoeba), this protein is NADH-ubiquinone oxidoreductase chain 6 (ND6).